A 43-amino-acid polypeptide reads, in one-letter code: CLAVATA3/ESR (CLE)-related protein 16D10 (43 aa).

Residues 1–30 (MFTNSIKNLIIYLMPLMVTLMLLSVSFVDA) form the signal peptide. The short motif at 31 to 43 (GKKPSGPNPGGNN) is the CLE element.

Belongs to the CLV3/ESR signal peptide family. In terms of tissue distribution, highly expressed exclusively within the subventral esophageal gland cell during syncytium formation in host plants.

The protein localises to the secreted. It is found in the host cytoplasm. It localises to the host extracellular space. Plays a role in the differentiation or division of feeding cells (syncytia) induced in plant roots during infection. Promotes host root growth. This chain is CLAVATA3/ESR (CLE)-related protein 16D10 (16D10), found in Meloidogyne arenaria (Peanut root-knot nematode).